An 887-amino-acid chain; its full sequence is Degenerin-like protein unc-105 (887 aa).

Positions 1–33 are disordered; sequence MAEDRIKSKLRRPASIESTMSSRTKPRHKPSPM. Topologically, residues 1–93 are cytoplasmic; sequence MAEDRIKSKL…AATADGKWRW (93 aa). A helical membrane pass occupies residues 94–114; it reads FWYTAFTICLLALLIQIFFLI. Topologically, residues 115 to 698 are extracellular; that stretch reads SKYRQYGKTV…SVLADLGGLT (584 aa). N-linked (GlcNAc...) asparagine glycans are attached at residues N244, N450, N473, N581, and N599. Residues 699–719 form a helical membrane-spanning segment; it reads GLWIGASVVSLLEIVTLIVFA. The Cytoplasmic segment spans residues 720 to 887; that stretch reads TQAYVRKRKG…YSAPYEHRKK (168 aa). 2 disordered regions span residues 794-815 and 859-887; these read AIQEQSDDEEETTESSRTNGSC and SNSEEEDAEDEVHREPEPFYSAPYEHRKK.

It belongs to the amiloride-sensitive sodium channel (TC 1.A.6) family. Expressed in body wall muscle.

Its subcellular location is the membrane. Its function is as follows. Ion channel which is permeable to small monovalent cations. Shown not to be H+-ion gated. May be mechanosensitive and is required for growth and muscle development. The protein is Degenerin-like protein unc-105 (unc-105) of Caenorhabditis elegans.